A 301-amino-acid chain; its full sequence is ATP synthase gamma chain (301 aa).

The protein belongs to the ATPase gamma chain family. F-type ATPases have 2 components, CF(1) - the catalytic core - and CF(0) - the membrane proton channel. CF(1) has five subunits: alpha(3), beta(3), gamma(1), delta(1), epsilon(1). CF(0) has three main subunits: a, b and c.

The protein localises to the cell inner membrane. Produces ATP from ADP in the presence of a proton gradient across the membrane. The gamma chain is believed to be important in regulating ATPase activity and the flow of protons through the CF(0) complex. This chain is ATP synthase gamma chain, found in Helicobacter pylori (strain ATCC 700392 / 26695) (Campylobacter pylori).